The primary structure comprises 983 residues: Protein translocase subunit SecA (983 aa).

ATP-binding positions include Gln-83, 101-105 (GEGKT), and Asp-489. The segment at 948–983 (ISSEEEDNNEKTNINNNEDLERTKGEAQQTAKNPNE) is disordered. The segment covering 973 to 983 (EAQQTAKNPNE) has biased composition (polar residues).

Belongs to the SecA family. In terms of assembly, monomer and homodimer. Part of the essential Sec protein translocation apparatus which comprises SecA, SecYEG and auxiliary proteins SecDF. Other proteins may also be involved.

It localises to the cell membrane. The protein localises to the cytoplasm. It carries out the reaction ATP + H2O + cellular proteinSide 1 = ADP + phosphate + cellular proteinSide 2.. In terms of biological role, part of the Sec protein translocase complex. Interacts with the SecYEG preprotein conducting channel. Has a central role in coupling the hydrolysis of ATP to the transfer of proteins into and across the cell membrane, serving as an ATP-driven molecular motor driving the stepwise translocation of polypeptide chains across the membrane. The chain is Protein translocase subunit SecA from Mesomycoplasma hyopneumoniae (strain J / ATCC 25934 / NCTC 10110) (Mycoplasma hyopneumoniae).